The following is a 304-amino-acid chain: Sulfotransferase 1C3 (304 aa).

Position 56–61 (56–61 (KSGTTW)) interacts with 3'-phosphoadenylyl sulfate. 115 to 117 (KTH) lines the substrate pocket. Histidine 117 serves as the catalytic Proton acceptor. 3'-phosphoadenylyl sulfate contacts are provided by residues arginine 139, serine 147, tyrosine 202, 236–241 (TSFDVM), and 264–268 (FMRKG).

The protein belongs to the sulfotransferase 1 family. In terms of tissue distribution, not detectable in any of the tissues tested. Expressed in the small intestine.

It localises to the cytoplasm. The catalysed reaction is an alcohol + 3'-phosphoadenylyl sulfate = an alkyl sulfate + adenosine 3',5'-bisphosphate + H(+). The enzyme catalyses a phenol + 3'-phosphoadenylyl sulfate = an aryl sulfate + adenosine 3',5'-bisphosphate + H(+). It catalyses the reaction lithocholate + 3'-phosphoadenylyl sulfate = lithocholate sulfate + adenosine 3',5'-bisphosphate + H(+). In terms of biological role, sulfotransferase that utilizes 3'-phospho-5'-adenylyl sulfate (PAPS) as sulfonate donor. Has sulfotransferase activity towards various substrates, such as bile acids, thyroid hormones and toward xenobiotic compounds such as chloro phenols and hydroxypyrenes. Lithocholic acid appears to be the best substrate among the endogenous compounds tested and 3,3',5,5'-tetrachloro-4,4'-biphenyldiol shows the highest specific activity among the xenobiotic compounds. Its function is as follows. Exhibits weak sulphating activity and only toward chloro phenols (pentachlorophenol and 3,3',5,5'-tetrachloro-4,4'-biphenyldiol). This chain is Sulfotransferase 1C3 (SULT1C3), found in Homo sapiens (Human).